Consider the following 203-residue polypeptide: GTP cyclohydrolase-2 (203 aa).

49–53 provides a ligand contact to GTP; it reads RIHSE. 3 residues coordinate Zn(2+): Cys-54, Cys-65, and Cys-67. GTP is bound by residues Gln-70, 92–94, and Thr-114; that span reads EGR. Catalysis depends on Asp-126, which acts as the Proton acceptor. The active-site Nucleophile is Arg-128. 2 residues coordinate GTP: Thr-149 and Lys-154.

Belongs to the GTP cyclohydrolase II family. Zn(2+) is required as a cofactor.

It catalyses the reaction GTP + 4 H2O = 2,5-diamino-6-hydroxy-4-(5-phosphoribosylamino)-pyrimidine + formate + 2 phosphate + 3 H(+). The protein operates within cofactor biosynthesis; riboflavin biosynthesis; 5-amino-6-(D-ribitylamino)uracil from GTP: step 1/4. Functionally, catalyzes the conversion of GTP to 2,5-diamino-6-ribosylamino-4(3H)-pyrimidinone 5'-phosphate (DARP), formate and pyrophosphate. The protein is GTP cyclohydrolase-2 of Shewanella sp. (strain ANA-3).